Consider the following 599-residue polypeptide: Tryptophan 2-C-methyltransferase (599 aa).

Residues 4-149 form the B12-binding domain; it reads KGTVALINPN…RALAEGRSAD (146 aa). Positions 167-197 are disordered; the sequence is RVAPPALDPRAAPAPSSSPSPSPAPSSSSAP. Residues 168-181 show a composition bias toward low complexity; sequence VAPPALDPRAAPAP. Positions 239 to 492 constitute a Radical SAM core domain; sequence YREGGLGSIL…IEYERQFMFD (254 aa). [4Fe-4S] cluster is bound by residues Cys253, Cys257, and Cys260.

[4Fe-4S] cluster serves as cofactor. The cofactor is cob(II)alamin.

It catalyses the reaction L-tryptophan + S-adenosyl-L-methionine = 2-methyl-L-tryptophan + S-adenosyl-L-homocysteine + H(+). Its function is as follows. Involved in the biosynthetic pathway of the antibiotic thiostrepton A. First, TsrM catalyzes the transfer of a methyl group from S-adenosyl methionine (SAM) to cobalamin, leading to the formation of methylcobalamin (CH3-cobalamin) and S-adenosyl-L-homocysteine (SAH). Then the methyl group is transferred to the C2 position of tryptophan (Trp) with the concerted action of the radical SAM [4Fe-4S] center, leading to the production of methyltryptophan. In Streptomyces laurentii, this protein is Tryptophan 2-C-methyltransferase.